Reading from the N-terminus, the 76-residue chain is ATP synthase subunit 9, mitochondrial (76 aa).

N-formylmethionine is present on Met1. Transmembrane regions (helical) follow at residues 14-34 and 52-72; these read LASIGLVGAGIGIAIVFAALI and ILGFALSEATGLFALMIAFLL.

As to quaternary structure, F-type ATP synthases have 2 components, the catalytic core F(1) and the membrane-embedded component F(0), linked together by a central stalk and a peripheral stalk. The central stalk, also called rotor shaft, is often seen as part of F(1). The peripheral stalk is seen as part of F(0). F(0) contains the membrane channel next to the rotor. F-type ATP synthases form dimers but each monomer functions independently in ATP generation. The dimer consists of 17 different polypeptides: ATP1 (subunit alpha, 3 molecules per monomer, part of F(1)), ATP2 (subunit beta, 3 copies per monomer, part of F(1)), ATP3 (subunit gamma, part of the central stalk), ATP4 (subunit b, part of the peripheral stalk), ATP5/OSCP (subunit 5/OSCP, part of the peripheral stalk), ATP6 (subunit a, part of the peripheral stalk), ATP7 (subunit d, part of the peripheral stalk), ATP8 (subunit 8, part of the peripheral stalk), OLI1 (subunit c, part of the rotor, 10 molecules per monomer), ATP14 (subunit h, part of the peripheral stalk), ATP15 (subunit epsilon, part of the central stalk), ATP16 (subunit delta, part of the central stalk), ATP17 (subunit f, part of the peripheral stalk), ATP18 (subunit i/j, part of the peripheral stalk), ATP19 (subunit k, dimer-specific, at interface between monomers), ATP20 (subunit g, at interface between monomers), TIM11 (subunit e, at interface between monomers).

The protein localises to the mitochondrion inner membrane. Functionally, mitochondrial membrane ATP synthase (F(1)F(0) ATP synthase or Complex V) produces ATP from ADP in the presence of a proton gradient across the membrane which is generated by electron transport complexes of the respiratory chain. F-type ATP synthases consist of two structural domains, F(1) - containing the extramembraneous catalytic core, and F(0) - containing the membrane proton channel, linked together by a central stalk and a peripheral stalk. During catalysis, ATP synthesis in the catalytic domain of F(1) is coupled via a rotary mechanism of the central stalk subunits to proton translocation. Part of the complex F(0) domain. A homomeric c-ring of 10 OLI1/ATP9 subunits is part of the complex rotary element. The protein is ATP synthase subunit 9, mitochondrial of Yarrowia lipolytica (strain CLIB 122 / E 150) (Yeast).